We begin with the raw amino-acid sequence, 184 residues long: Endoribonuclease YbeY (184 aa).

Zn(2+) contacts are provided by His-118, His-122, and His-128.

Belongs to the endoribonuclease YbeY family. It depends on Zn(2+) as a cofactor.

It is found in the cytoplasm. Functionally, single strand-specific metallo-endoribonuclease involved in late-stage 70S ribosome quality control and in maturation of the 3' terminus of the 16S rRNA. This chain is Endoribonuclease YbeY, found in Nocardia farcinica (strain IFM 10152).